A 220-amino-acid chain; its full sequence is NAD(P)H-hydrate epimerase (220 aa).

Positions 6–203 constitute a YjeF N-terminal domain; it reads ARHLTTLATG…SFDLPEALFH (198 aa). 53 to 57 contacts (6S)-NADPHX; the sequence is HNGGV. K(+) contacts are provided by N54 and D116. Residues 120-126 and D149 each bind (6S)-NADPHX; that span reads GMRLEGP. T152 contacts K(+).

It belongs to the NnrE/AIBP family. The cofactor is K(+).

It carries out the reaction (6R)-NADHX = (6S)-NADHX. The catalysed reaction is (6R)-NADPHX = (6S)-NADPHX. Its function is as follows. Catalyzes the epimerization of the S- and R-forms of NAD(P)HX, a damaged form of NAD(P)H that is a result of enzymatic or heat-dependent hydration. This is a prerequisite for the S-specific NAD(P)H-hydrate dehydratase to allow the repair of both epimers of NAD(P)HX. This chain is NAD(P)H-hydrate epimerase, found in Truepera radiovictrix (strain DSM 17093 / CIP 108686 / LMG 22925 / RQ-24).